The sequence spans 354 residues: Uroporphyrinogen decarboxylase (354 aa).

Substrate is bound by residues 27 to 31, Asp-77, Tyr-154, Thr-209, and His-327; that span reads RQAGR.

This sequence belongs to the uroporphyrinogen decarboxylase family. In terms of assembly, homodimer.

The protein resides in the cytoplasm. The enzyme catalyses uroporphyrinogen III + 4 H(+) = coproporphyrinogen III + 4 CO2. Its pathway is porphyrin-containing compound metabolism; protoporphyrin-IX biosynthesis; coproporphyrinogen-III from 5-aminolevulinate: step 4/4. Catalyzes the decarboxylation of four acetate groups of uroporphyrinogen-III to yield coproporphyrinogen-III. The chain is Uroporphyrinogen decarboxylase from Actinobacillus pleuropneumoniae serotype 5b (strain L20).